The chain runs to 1034 residues: Presequence protease, mitochondrial (1034 aa).

Residues 1 to 26 (MLKTRLKQSRAISRVVRRYACSHPIS) constitute a mitochondrion transit peptide. Position 97 (histidine 97) interacts with Zn(2+). The active-site Proton acceptor is the glutamate 100. Histidine 101 provides a ligand contact to Zn(2+). Glutamate 173 is an active-site residue. Glutamate 198 is a Zn(2+) binding site.

The protein belongs to the peptidase M16 family. PreP subfamily. Monomer and homodimer; homodimerization is induced by binding of the substrate. It depends on Zn(2+) as a cofactor.

The protein localises to the mitochondrion intermembrane space. It is found in the mitochondrion matrix. Degrades mitochondrial transit peptides after their cleavage in the intermembrane space or in the matrix, and presequence peptides; clearance of these peptides is required to keep the presequence processing machinery running. Preferentially cleaves the N-terminal side of paired basic amino acid residues. Also degrades other unstructured peptides. May function as an ATP-dependent peptidase as opposed to a metalloendopeptidase. This is Presequence protease, mitochondrial (CYM1) from Candida albicans (strain SC5314 / ATCC MYA-2876) (Yeast).